The primary structure comprises 185 residues: Probable chorismate pyruvate-lyase (185 aa).

Positions 75, 113, and 174 each coordinate substrate.

This sequence belongs to the UbiC family.

It is found in the cytoplasm. It catalyses the reaction chorismate = 4-hydroxybenzoate + pyruvate. It participates in cofactor biosynthesis; ubiquinone biosynthesis. Functionally, removes the pyruvyl group from chorismate, with concomitant aromatization of the ring, to provide 4-hydroxybenzoate (4HB) for the ubiquinone pathway. The polypeptide is Probable chorismate pyruvate-lyase (Aromatoleum aromaticum (strain DSM 19018 / LMG 30748 / EbN1) (Azoarcus sp. (strain EbN1))).